Consider the following 363-residue polypeptide: UDP-N-acetylglucosamine--N-acetylmuramyl-(pentapeptide) pyrophosphoryl-undecaprenol N-acetylglucosamine transferase (363 aa).

UDP-N-acetyl-alpha-D-glucosamine is bound by residues 14 to 16 (TGG), arginine 171, serine 200, and glutamine 290.

This sequence belongs to the glycosyltransferase 28 family. MurG subfamily.

The protein localises to the cell inner membrane. The enzyme catalyses di-trans,octa-cis-undecaprenyl diphospho-N-acetyl-alpha-D-muramoyl-L-alanyl-D-glutamyl-meso-2,6-diaminopimeloyl-D-alanyl-D-alanine + UDP-N-acetyl-alpha-D-glucosamine = di-trans,octa-cis-undecaprenyl diphospho-[N-acetyl-alpha-D-glucosaminyl-(1-&gt;4)]-N-acetyl-alpha-D-muramoyl-L-alanyl-D-glutamyl-meso-2,6-diaminopimeloyl-D-alanyl-D-alanine + UDP + H(+). The protein operates within cell wall biogenesis; peptidoglycan biosynthesis. Cell wall formation. Catalyzes the transfer of a GlcNAc subunit on undecaprenyl-pyrophosphoryl-MurNAc-pentapeptide (lipid intermediate I) to form undecaprenyl-pyrophosphoryl-MurNAc-(pentapeptide)GlcNAc (lipid intermediate II). The sequence is that of UDP-N-acetylglucosamine--N-acetylmuramyl-(pentapeptide) pyrophosphoryl-undecaprenol N-acetylglucosamine transferase from Borrelia garinii subsp. bavariensis (strain ATCC BAA-2496 / DSM 23469 / PBi) (Borreliella bavariensis).